Reading from the N-terminus, the 522-residue chain is MAFLDNPTIILAHIRQSHVTSDDTGMCEMVLIDHDVDLEKIHPPSMPGDSGSEIQGSNGETQGYVYAQSVDITSSWDFGIRRRSNTAQRLERLRKERQNQIKCKNIQWKERNSKQSAQELKSLFEKKSLKEKPPISGKQSILSVRLEQCPLQLNNPFNEYSKFDGKGHVGTTATKKIDVYLPLHSSQDRLLPMTVVTMASARVQDLIGLICWQYTSEGREPKLNDNVSAYCLHIAEDDGEVDTDFPPLDSNEPIHKFGFSTLALVEKYSSPGLTSKESLFVRINAAHGFSLIQVDNTKVTMKEILLKAVKRRKGSQKVSGPQYRLEKQSEPNVAVDLDSTLESQSAWEFCLVRENSSRADGVFEEDSQIDIATVQDMLSSHHYKSFKVSMIHRLRFTTDVQLGISGDKVEIDPVTNQKASTKFWIKQKPISIDSDLLCACDLAEEKSPSHAIFKLTYLSNHDYKHLYFESDAATVNEIVLKVNYILESRASTARADYFAQKQRKLNRRTSFSFQKEKKSGQQ.

An N-acetylalanine modification is found at Ala-2. An interaction with MAP3K2 region spans residues 2 to 184; sequence AFLDNPTIIL…KKIDVYLPLH (183 aa). An interaction with NBN region spans residues 2-267; that stretch reads AFLDNPTIIL…GFSTLALVEK (266 aa). Thr-86 is subject to Phosphothreonine. A phosphoserine mark is found at Ser-128, Ser-186, Ser-315, and Ser-356. The CRIM domain maps to 139 to 267; the sequence is QSILSVRLEQ…GFSTLALVEK (129 aa). The tract at residues 279–353 is SIN1-type RBD; the sequence is LFVRINAAHG…QSAWEFCLVR (75 aa). Residues 382 to 487 enclose the SIN1-type PH domain; it reads HYKSFKVSMI…IVLKVNYILE (106 aa). An a 1,2-diacyl-sn-glycero-3-phospho-(1D-myo-inositol-3,4,5-trisphosphate)-binding site is contributed by Arg-393. A Phosphothreonine modification is found at Thr-398. A 1,2-diacyl-sn-glycero-3-phospho-(1D-myo-inositol-3,4,5-trisphosphate) is bound by residues Lys-428 and Lys-464. An interaction with ATF2 region spans residues 468-522; the sequence is FESDAATVNEIVLKVNYILESRASTARADYFAQKQRKLNRRTSFSFQKEKKSGQQ. Ser-510 is subject to Phosphoserine.

It belongs to the SIN1 family. In terms of assembly, component of the mechanistic target of rapamycin complex 2 (mTORC2), consisting in two heterotretramers composed of MTOR, MLST8, RICTOR and MAPKAP1/SIN1. The mTORC2 core complex associates with PRR5/PROTOR1 and/or PRR5L/PROTOR2. Contrary to mTORC1, mTORC2 does not bind to and is not sensitive to FKBP12-rapamycin. Interacts with MAP3K2. Interacts with ATF2. Interacts with MAPK8. Interacts with GTP-bound HRAS and KRAS; inhibiting their activity. Interacts with IFNAR2. Interacts with CCDC28B. As to quaternary structure, interacts with NBN. Post-translationally, phosphorylation at Ser-128 by PKC promotes relocalization to the perinuclear region, where the mTORC2 complex specifically mediates phosphorylation of SGK1. Phosphorylated at Thr-86 by AKT1 or RPS6KB1 in the presence of growth factors; the effect of this phosphorylation is however unclear. According to two studies, phosphorylation at Thr-86 by AKT1 is part of a positive feedback loop that increases mTORC2 activation. According to another study, phosphorylation at Thr-86 and Thr-398 by RPS6KB1 promotes dissociation from the mTORC2 complex, leading to inhibit mTORC2 signaling. As to expression, ubiquitously expressed, with highest levels in heart and skeletal muscle.

The protein localises to the cell membrane. The protein resides in the endoplasmic reticulum membrane. Its subcellular location is the early endosome membrane. It localises to the late endosome membrane. It is found in the lysosome membrane. The protein localises to the golgi apparatus membrane. The protein resides in the mitochondrion outer membrane. Its subcellular location is the cytoplasm. It localises to the perinuclear region. It is found in the nucleus. The protein localises to the cytosol. Its activity is regulated as follows. Phosphatidylinositol 3,4,5-trisphosphate (PI(3,4,5)P3) promotes MTOR activation by relieving MAPKAP1/SIN1-mediated inhibition of MTOR that takes place in absence of PI(3,4,5)P3. Functionally, component of the mechanistic target of rapamycin complex 2 (mTORC2), which transduces signals from growth factors to pathways involved in proliferation, cytoskeletal organization, lipogenesis and anabolic output. In response to growth factors, mTORC2 phosphorylates and activates AGC protein kinase family members, including AKT (AKT1, AKT2 and AKT3), PKC (PRKCA, PRKCB and PRKCE) and SGK1. In contrast to mTORC1, mTORC2 is nutrient-insensitive. Within the mTORC2 complex, MAPKAP1/SIN1 acts as a substrate adapter which recognizes and binds AGC protein kinase family members for phosphorylation by MTOR. mTORC2 plays a critical role in AKT1 activation by mediating phosphorylation of different sites depending on the context, such as 'Thr-450', 'Ser-473', 'Ser-477' or 'Thr-479', facilitating the phosphorylation of the activation loop of AKT1 on 'Thr-308' by PDPK1/PDK1 which is a prerequisite for full activation. mTORC2 catalyzes the phosphorylation of SGK1 at 'Ser-422' and of PRKCA on 'Ser-657'. The mTORC2 complex also phosphorylates various proteins involved in insulin signaling, such as FBXW8 and IGF2BP1. mTORC2 acts upstream of Rho GTPases to regulate the actin cytoskeleton, probably by activating one or more Rho-type guanine nucleotide exchange factors. mTORC2 promotes the serum-induced formation of stress-fibers or F-actin. MAPKAP1 inhibits MAP3K2 by preventing its dimerization and autophosphorylation. Inhibits HRAS and KRAS independently of mTORC2 complex. Enhances osmotic stress-induced phosphorylation of ATF2 and ATF2-mediated transcription. Involved in ciliogenesis, regulates cilia length through its interaction with CCDC28B independently of mTORC2 complex. In terms of biological role, in contrast to isoform 1, isoform 2 and isoform 6, isoform 4 is not a component of the a mTORC2 complex. This Homo sapiens (Human) protein is Target of rapamycin complex 2 subunit MAPKAP1.